The chain runs to 754 residues: MKITTVGVCIISGIFPLLILPQLPGTLTLAFLTLFACVLAFIPVKTVRYIALTLLFFVWGILSAKQILWAGETLTGATQDAIVEITATDGMTTHYGQITHLQGRRIFPASGLVMYGEYLPQAVCAGQQWSMKLKVRAVHGQLNDGGFDSQRYAIAQHQPLTGRFLQASVIEPNCSLRAQYLASLQTTLQPYPWNAVILGLGMGERLSVPKEIKNIMRDTGTAHLMAISGLHIAFAALLAAGLIRSGQIFLPGRWIHWQIPLIGGICCAAFYAWLTGMQPPALRTMVALATWGMLKLSGRQWSGWDVWICCLAAILLMDPVAILSQSLWLSAAAVAALIFWYQWFPCPEWQLPPVLRAVVSLIHLQLGITLLLMPVQIVIFHGISLTSFIANLLAIPLVTFITVPLILAAMVVHLSGPLILEQGLWFLADRSLALLFWGLKSLPEGWINIAECWQWLSFSPWFLLVVWRLNAWRTLPAMCVAGGLLMCWPLWQKPRPDEWQLYMLDVGQGLAMVIARNGKAILYDTGLAWPEGDSGQQLIIPWLHWHNLEPEGVILSHEHLDHRGGLDSILHIWPMLWIRSPLNWEHHQPCVRGEAWQWQGLRFSAHWPLQGSNDKGNNHSCVVKVDDGTNSILLTGDIEAPAEQKMLSRYWQQVQATLLQVPHHGSNTSSSLPLIQRVNGKVALASASRYNAWRLPSNKVKHRYQLQGYQWIDTPHQGQTTVNFSAQGWRISSLREQILPRWYHQWFGVPVDNG.

10 consecutive transmembrane segments (helical) span residues 3 to 23, 24 to 44, 50 to 70, 223 to 243, 254 to 274, 320 to 340, 370 to 390, 392 to 412, 446 to 466, and 471 to 491; these read ITTV…LPQL, PGTL…FIPV, IALT…ILWA, HLMA…AGLI, WIHW…YAWL, VAIL…LIFW, LLLM…SFIA, LLAI…AMVV, WINI…LLVV, and AWRT…WPLW.

To B.subtilis ComEC, N.gonorrhoeae ComA, and H.influenzae Rec2.

The protein localises to the cell membrane. This is an uncharacterized protein from Escherichia coli (strain K12).